The sequence spans 399 residues: Cell division protein FtsZ (399 aa).

GTP is bound by residues 30–34 (GGGSN), 117–119 (GTG), Glu148, Lys152, and Asp196. A disordered region spans residues 349–368 (TLMSGNQNAPSGSYEQQDSS). A compositionally biased stretch (polar residues) spans 351-368 (MSGNQNAPSGSYEQQDSS).

The protein belongs to the FtsZ family. In terms of assembly, homodimer. Polymerizes to form a dynamic ring structure in a strictly GTP-dependent manner. Interacts directly with several other division proteins.

The protein resides in the cytoplasm. Functionally, essential cell division protein that forms a contractile ring structure (Z ring) at the future cell division site. The regulation of the ring assembly controls the timing and the location of cell division. One of the functions of the FtsZ ring is to recruit other cell division proteins to the septum to produce a new cell wall between the dividing cells. Binds GTP and shows GTPase activity. This Borreliella burgdorferi (strain ATCC 35210 / DSM 4680 / CIP 102532 / B31) (Borrelia burgdorferi) protein is Cell division protein FtsZ.